The chain runs to 443 residues: Methyl-coenzyme M reductase subunit beta (443 aa).

Residue Tyr367 coordinates coenzyme M. Gly369 contacts coenzyme B.

This sequence belongs to the methyl-coenzyme M reductase beta subunit family. In terms of assembly, MCR is a hexamer of two alpha, two beta, and two gamma chains, forming a dimer of heterotrimers. Requires coenzyme F430 as cofactor.

The protein resides in the cytoplasm. It catalyses the reaction coenzyme B + methyl-coenzyme M = methane + coenzyme M-coenzyme B heterodisulfide. The protein operates within one-carbon metabolism; methyl-coenzyme M reduction; methane from methyl-coenzyme M: step 1/1. In terms of biological role, component of the methyl-coenzyme M reductase (MCR) I that catalyzes the reductive cleavage of methyl-coenzyme M (CoM-S-CH3 or 2-(methylthio)ethanesulfonate) using coenzyme B (CoB or 7-mercaptoheptanoylthreonine phosphate) as reductant which results in the production of methane and the mixed heterodisulfide of CoB and CoM (CoM-S-S-CoB). This is the final step in methanogenesis. This chain is Methyl-coenzyme M reductase subunit beta (mcrB), found in Methanococcus voltae.